Consider the following 315-residue polypeptide: Voltage-dependent calcium channel gamma-3 subunit (315 aa).

The next 4 helical transmembrane spans lie at 8 to 28 (VQML…TIAV), 104 to 124 (SSVF…CVAA), 135 to 155 (ILSA…GIIV), and 181 to 201 (FGAF…HIYI). The tract at residues 232–252 (RRRSSSRSTEPRSRDLSPISK) is disordered. Phosphoserine is present on Ser248.

It belongs to the PMP-22/EMP/MP20 family. CACNG subfamily. As to quaternary structure, the L-type calcium channel is composed of five subunits: alpha-1, alpha-2/delta, beta and gamma. Acts as an auxiliary subunit for AMPA-selective glutamate receptors (AMPARs). Found in a complex with GRIA1, GRIA2, GRIA3, GRIA4, CNIH2, CNIH3, CACNG2, CACNG4, CACNG5, CACNG7 and CACNG8. Interacts with AP4M1 and GRIA1; associates GRIA1 with the adaptor protein complex 4 (AP-4) to target GRIA1 to the somatodendritic compartment of neurons.

It localises to the membrane. In terms of biological role, regulates the trafficking and gating properties of AMPA-selective glutamate receptors (AMPARs). Promotes their targeting to the cell membrane and synapses and modulates their gating properties by slowing their rates of activation, deactivation and desensitization. Does not show subunit-specific AMPA receptor regulation and regulates all AMPAR subunits. Thought to stabilize the calcium channel in an inactivated (closed) state. This is Voltage-dependent calcium channel gamma-3 subunit (CACNG3) from Bos taurus (Bovine).